The primary structure comprises 1766 residues: DNA-directed RNA polymerase II subunit RPB1-B (1766 aa).

4 residues coordinate Zn(2+): cysteine 69, cysteine 72, cysteine 79, and histidine 82. Mg(2+) contacts are provided by aspartate 487, aspartate 489, and aspartate 491. The tract at residues proline 813–glutamate 825 is bridging helix. Residues histidine 1660–glutamine 1766 are disordered. Over residues arginine 1706–aspartate 1716 the composition is skewed to basic and acidic residues. A compositionally biased stretch (low complexity) spans proline 1742–alanine 1756.

This sequence belongs to the RNA polymerase beta' chain family. In terms of assembly, component of the RNA polymerase II (Pol II) complex consisting of 12 subunits.

It localises to the nucleus. It catalyses the reaction RNA(n) + a ribonucleoside 5'-triphosphate = RNA(n+1) + diphosphate. Functionally, DNA-dependent RNA polymerase catalyzes the transcription of DNA into RNA using the four ribonucleoside triphosphates as substrates. Largest and catalytic component of RNA polymerase II which synthesizes mRNA precursors and many functional non-coding RNAs. Forms the polymerase active center together with the second largest subunit. Pol II is the central component of the basal RNA polymerase II transcription machinery. It is composed of mobile elements that move relative to each other. RPB1 is part of the core element with the central large cleft, the clamp element that moves to open and close the cleft and the jaws that are thought to grab the incoming DNA template. At the start of transcription, a single-stranded DNA template strand of the promoter is positioned within the central active site cleft of Pol II. A bridging helix emanates from RPB1 and crosses the cleft near the catalytic site and is thought to promote translocation of Pol II by acting as a ratchet that moves the RNA-DNA hybrid through the active site by switching from straight to bent conformations at each step of nucleotide addition. During transcription elongation, Pol II moves on the template as the transcript elongates. The sequence is that of DNA-directed RNA polymerase II subunit RPB1-B (TRP5.9) from Trypanosoma brucei brucei.